We begin with the raw amino-acid sequence, 69 residues long: DNA gyrase inhibitor YacG (69 aa).

Residues 1–15 (MSDEPEHTAKVEPLR) are compositionally biased toward basic and acidic residues. The segment at 1 to 22 (MSDEPEHTAKVEPLRKPLPCPE) is disordered. Residues cysteine 20, cysteine 23, cysteine 35, and cysteine 39 each coordinate Zn(2+).

The protein belongs to the DNA gyrase inhibitor YacG family. Interacts with GyrB. Requires Zn(2+) as cofactor.

In terms of biological role, inhibits all the catalytic activities of DNA gyrase by preventing its interaction with DNA. Acts by binding directly to the C-terminal domain of GyrB, which probably disrupts DNA binding by the gyrase. The sequence is that of DNA gyrase inhibitor YacG from Allorhizobium ampelinum (strain ATCC BAA-846 / DSM 112012 / S4) (Agrobacterium vitis (strain S4)).